We begin with the raw amino-acid sequence, 321 residues long: Calcium-regulated beta-propeller protein CarP (321 aa).

The signal sequence occupies residues 1–42; it reads MTIHAQTPEPFSMSRAFTPRRLLLAVLLVALSALVLLGQSFR.

Belongs to the YjiK family.

The protein resides in the cell inner membrane. In terms of biological role, plays a role in intracellular Ca(2+) homeostasis. Involved in modulating Ca(2+)-induced swarming motility and pyocyanine production. Plays a role in regulating virulence in a Ca(2+)-dependent manner. Involved in cell protection against oxidative stress in the presence of elevated Ca(2+). This is Calcium-regulated beta-propeller protein CarP from Pseudomonas aeruginosa (strain ATCC 15692 / DSM 22644 / CIP 104116 / JCM 14847 / LMG 12228 / 1C / PRS 101 / PAO1).